The sequence spans 192 residues: MRSPQSLRNGETPSPSPRPPRFPTPHFHSTVSLQKLKRFNLLILVFRLSTFCFSLASSVFMLTNPTWYHFDAFRYVFAANAIVAIYSLFEMAASVWEISRGNTLFPEILQVWFDFGHDQVFAYLLLSADSAATALAKTLKGGDTCAASNAFCVQSYIAIALGFAGFLFLGLSSLLSGFRVVCFLINGSRFYV.

Polar residues predominate over residues 1-11; that stretch reads MRSPQSLRNGE. A disordered region spans residues 1 to 23; sequence MRSPQSLRNGETPSPSPRPPRFP. Residues 1-40 lie on the Cytoplasmic side of the membrane; that stretch reads MRSPQSLRNGETPSPSPRPPRFPTPHFHSTVSLQKLKRFN. The span at 14-23 shows a compositional bias: pro residues; sequence SPSPRPPRFP. Residues 41–61 traverse the membrane as a helical segment; that stretch reads LLILVFRLSTFCFSLASSVFM. The Extracellular portion of the chain corresponds to 62–75; that stretch reads LTNPTWYHFDAFRY. Residues 76–96 traverse the membrane as a helical segment; the sequence is VFAANAIVAIYSLFEMAASVW. At 97 to 107 the chain is on the cytoplasmic side; that stretch reads EISRGNTLFPE. Residues 108 to 128 traverse the membrane as a helical segment; the sequence is ILQVWFDFGHDQVFAYLLLSA. The Extracellular portion of the chain corresponds to 129–156; the sequence is DSAATALAKTLKGGDTCAASNAFCVQSY. Residues 157–177 form a helical membrane-spanning segment; it reads IAIALGFAGFLFLGLSSLLSG. The Cytoplasmic segment spans residues 178-192; that stretch reads FRVVCFLINGSRFYV.

The protein belongs to the Casparian strip membrane proteins (CASP) family. Homodimer and heterodimers.

The protein localises to the cell membrane. The sequence is that of CASP-like protein 4C1 from Ricinus communis (Castor bean).